A 233-amino-acid polypeptide reads, in one-letter code: Large ribosomal subunit protein uL1 (233 aa).

This sequence belongs to the universal ribosomal protein uL1 family. As to quaternary structure, part of the 50S ribosomal subunit.

In terms of biological role, binds directly to 23S rRNA. Forms the L1 stalk. Unlike the case in the Thermus thermophilus 70S ribosome, this protein is not seen to block the exit path of the E site tRNA. It is clear that the protein in the structure is flexible however, so this is probably due to its position in these crystals. Functionally, protein L1 is also a translational repressor protein, it controls the translation of the L11 operon by binding to its mRNA. This is Large ribosomal subunit protein uL1 (rplA) from Deinococcus radiodurans (strain ATCC 13939 / DSM 20539 / JCM 16871 / CCUG 27074 / LMG 4051 / NBRC 15346 / NCIMB 9279 / VKM B-1422 / R1).